A 78-amino-acid chain; its full sequence is Putative membrane protein insertion efficiency factor (78 aa).

Belongs to the UPF0161 family.

The protein resides in the cell inner membrane. In terms of biological role, could be involved in insertion of integral membrane proteins into the membrane. The chain is Putative membrane protein insertion efficiency factor from Prochlorococcus marinus (strain MIT 9301).